We begin with the raw amino-acid sequence, 602 residues long: Ligand-dependent nuclear receptor corepressor-like protein (602 aa).

The interval 104-124 (PSLDSSQSTPTEELSSQGQSN) is disordered. Positions 106–124 (LDSSQSTPTEELSSQGQSN) are enriched in polar residues. Glycyl lysine isopeptide (Lys-Gly) (interchain with G-Cter in SUMO2) cross-links involve residues Lys-242, Lys-319, Lys-340, and Lys-397. Disordered regions lie at residues 495-521 (TVDG…KRGR) and 564-602 (ERSG…SKPV). In terms of domain architecture, HTH psq-type spans 516–568 (RKKRGRYRQYDHEIMEEAIAMVMSGKMSVSKAQGIYGVPHSTLEYKVKERSGT). Residues 544–564 (VSKAQGIYGVPHSTLEYKVKE) constitute a DNA-binding region (H-T-H motif). Residues 585–602 (YNMTDSGTGSCKNSSKPV) show a composition bias toward polar residues.

The protein resides in the nucleus. In terms of biological role, may act as transcription activator that binds DNA elements with the sequence 5'-CCCTATCGATCGATCTCTACCT-3'. May play a role in spermatogenesis. The protein is Ligand-dependent nuclear receptor corepressor-like protein (LCORL) of Homo sapiens (Human).